Here is a 310-residue protein sequence, read N- to C-terminus: MIIVTGGAGFIGSNIVKALNDKGITDILVVDNLKDGTKFVNLVDLNIADYMDKEDFLIQIMAGEEFGEIEAIFHEGACSSTTEWDGKYMMDNNYQYSKELLHYCLEREIPFLYASSAATYGGRTSDFIESREYEQPLNVYGYSKFLFDEYVRQILPEANSQIVGFRYFNVYGPREGHKGSMASVAFHLNTQLNNGESPKLFEGSDGFKRDFVYVGDVADVNLWFWENGVSGIFNLGTGRAESFQPVADATLAYHKKGSIEYIPFPDKLKGRYQAFTQADLTNLRKAGYDKPFKTVAEGVTEYMAWLNRDA.

Residues Phe10 to Ile11, Asp31 to Asn32, Lys38, Lys53, Glu75 to Ser79, and Asn92 contribute to the NADP(+) site. Tyr140 serves as the catalytic Proton acceptor. An NADP(+)-binding site is contributed by Lys144. Substrate is bound at residue Asn169. Residues Val170 and Lys178 each coordinate NADP(+). Lys178 serves as the catalytic Proton acceptor. Residues Ser180, His187, Phe201–Ser204, Arg209, and Tyr272 contribute to the substrate site.

It belongs to the NAD(P)-dependent epimerase/dehydratase family. HldD subfamily. Homopentamer. NADP(+) is required as a cofactor.

The catalysed reaction is ADP-D-glycero-beta-D-manno-heptose = ADP-L-glycero-beta-D-manno-heptose. Its pathway is nucleotide-sugar biosynthesis; ADP-L-glycero-beta-D-manno-heptose biosynthesis; ADP-L-glycero-beta-D-manno-heptose from D-glycero-beta-D-manno-heptose 7-phosphate: step 4/4. It functions in the pathway bacterial outer membrane biogenesis; LPS core biosynthesis. Catalyzes the interconversion between ADP-D-glycero-beta-D-manno-heptose and ADP-L-glycero-beta-D-manno-heptose via an epimerization at carbon 6 of the heptose. The protein is ADP-L-glycero-D-manno-heptose-6-epimerase of Klebsiella pneumoniae.